Here is a 262-residue protein sequence, read N- to C-terminus: Phosphatidylserine decarboxylase proenzyme (262 aa).

Catalysis depends on charge relay system; for autoendoproteolytic cleavage activity residues aspartate 86, histidine 142, and serine 226. Serine 226 functions as the Schiff-base intermediate with substrate; via pyruvic acid; for decarboxylase activity in the catalytic mechanism. A Pyruvic acid (Ser); by autocatalysis modification is found at serine 226.

Belongs to the phosphatidylserine decarboxylase family. PSD-B subfamily. Prokaryotic type I sub-subfamily. As to quaternary structure, heterodimer of a large membrane-associated beta subunit and a small pyruvoyl-containing alpha subunit. Pyruvate is required as a cofactor. Is synthesized initially as an inactive proenzyme. Formation of the active enzyme involves a self-maturation process in which the active site pyruvoyl group is generated from an internal serine residue via an autocatalytic post-translational modification. Two non-identical subunits are generated from the proenzyme in this reaction, and the pyruvate is formed at the N-terminus of the alpha chain, which is derived from the carboxyl end of the proenzyme. The autoendoproteolytic cleavage occurs by a canonical serine protease mechanism, in which the side chain hydroxyl group of the serine supplies its oxygen atom to form the C-terminus of the beta chain, while the remainder of the serine residue undergoes an oxidative deamination to produce ammonia and the pyruvoyl prosthetic group on the alpha chain. During this reaction, the Ser that is part of the protease active site of the proenzyme becomes the pyruvoyl prosthetic group, which constitutes an essential element of the active site of the mature decarboxylase.

Its subcellular location is the cell membrane. It catalyses the reaction a 1,2-diacyl-sn-glycero-3-phospho-L-serine + H(+) = a 1,2-diacyl-sn-glycero-3-phosphoethanolamine + CO2. Its pathway is phospholipid metabolism; phosphatidylethanolamine biosynthesis; phosphatidylethanolamine from CDP-diacylglycerol: step 2/2. In terms of biological role, catalyzes the formation of phosphatidylethanolamine (PtdEtn) from phosphatidylserine (PtdSer). In Bacillus anthracis, this protein is Phosphatidylserine decarboxylase proenzyme.